The sequence spans 38 residues: Cytochrome b6-f complex subunit 5 (38 aa).

A helical membrane pass occupies residues 5 to 25 (LLLGIVLGLIPITLAGLFVAA).

The protein belongs to the PetG family. In terms of assembly, the 4 large subunits of the cytochrome b6-f complex are cytochrome b6, subunit IV (17 kDa polypeptide, PetD), cytochrome f and the Rieske protein, while the 4 small subunits are PetG, PetL, PetM and PetN. The complex functions as a dimer.

It is found in the cellular thylakoid membrane. Functionally, component of the cytochrome b6-f complex, which mediates electron transfer between photosystem II (PSII) and photosystem I (PSI), cyclic electron flow around PSI, and state transitions. PetG is required for either the stability or assembly of the cytochrome b6-f complex. This chain is Cytochrome b6-f complex subunit 5, found in Rippkaea orientalis (strain PCC 8801 / RF-1) (Cyanothece sp. (strain PCC 8801)).